Here is a 399-residue protein sequence, read N- to C-terminus: Probable dual-specificity RNA methyltransferase RlmN (399 aa).

Catalysis depends on Glu-102, which acts as the Proton acceptor. One can recognise a Radical SAM core domain in the interval Tyr-108–Ala-385. Cys-115 and Cys-390 form a disulfide bridge. Residues Cys-122, Cys-126, and Cys-129 each contribute to the [4Fe-4S] cluster site. Residues Gly-207 to Glu-208, Ser-239, Ser-262 to His-264, and Asn-347 contribute to the S-adenosyl-L-methionine site. Residue Cys-390 is the S-methylcysteine intermediate of the active site.

Belongs to the radical SAM superfamily. RlmN family. It depends on [4Fe-4S] cluster as a cofactor.

The protein resides in the cytoplasm. It carries out the reaction adenosine(2503) in 23S rRNA + 2 reduced [2Fe-2S]-[ferredoxin] + 2 S-adenosyl-L-methionine = 2-methyladenosine(2503) in 23S rRNA + 5'-deoxyadenosine + L-methionine + 2 oxidized [2Fe-2S]-[ferredoxin] + S-adenosyl-L-homocysteine. It catalyses the reaction adenosine(37) in tRNA + 2 reduced [2Fe-2S]-[ferredoxin] + 2 S-adenosyl-L-methionine = 2-methyladenosine(37) in tRNA + 5'-deoxyadenosine + L-methionine + 2 oxidized [2Fe-2S]-[ferredoxin] + S-adenosyl-L-homocysteine. Specifically methylates position 2 of adenine 2503 in 23S rRNA and position 2 of adenine 37 in tRNAs. The protein is Probable dual-specificity RNA methyltransferase RlmN of Roseiflexus castenholzii (strain DSM 13941 / HLO8).